The primary structure comprises 183 residues: Small ribosomal subunit protein uS5 (183 aa).

Residues 11–71 (FLERVVGINR…EEAKKSFFRV (61 aa)) enclose the S5 DRBM domain.

It belongs to the universal ribosomal protein uS5 family. As to quaternary structure, part of the 30S ribosomal subunit. Contacts proteins S4 and S8.

In terms of biological role, with S4 and S12 plays an important role in translational accuracy. Functionally, located at the back of the 30S subunit body where it stabilizes the conformation of the head with respect to the body. This is Small ribosomal subunit protein uS5 from Micrococcus luteus (Micrococcus lysodeikticus).